The primary structure comprises 647 residues: 1-deoxy-D-xylulose-5-phosphate synthase (647 aa).

Thiamine diphosphate contacts are provided by residues His-88 and Gly-129 to Ala-131. Residue Asp-160 coordinates Mg(2+). Thiamine diphosphate contacts are provided by residues Gly-161 to Ala-162, Asn-189, Tyr-300, and Glu-377. Asn-189 lines the Mg(2+) pocket.

Belongs to the transketolase family. DXPS subfamily. Homodimer. The cofactor is Mg(2+). Requires thiamine diphosphate as cofactor.

It catalyses the reaction D-glyceraldehyde 3-phosphate + pyruvate + H(+) = 1-deoxy-D-xylulose 5-phosphate + CO2. It participates in metabolic intermediate biosynthesis; 1-deoxy-D-xylulose 5-phosphate biosynthesis; 1-deoxy-D-xylulose 5-phosphate from D-glyceraldehyde 3-phosphate and pyruvate: step 1/1. Catalyzes the acyloin condensation reaction between C atoms 2 and 3 of pyruvate and glyceraldehyde 3-phosphate to yield 1-deoxy-D-xylulose-5-phosphate (DXP). The protein is 1-deoxy-D-xylulose-5-phosphate synthase of Dehalococcoides mccartyi (strain CBDB1).